The following is a 536-amino-acid chain: Chaperonin GroEL (536 aa).

ATP contacts are provided by residues 29–32 (TLGP), 86–90 (DGTTT), Gly-413, 476–478 (DAA), and Asp-492.

It belongs to the chaperonin (HSP60) family. Forms a cylinder of 14 subunits composed of two heptameric rings stacked back-to-back. Interacts with the co-chaperonin GroES.

Its subcellular location is the cytoplasm. The catalysed reaction is ATP + H2O + a folded polypeptide = ADP + phosphate + an unfolded polypeptide.. Together with its co-chaperonin GroES, plays an essential role in assisting protein folding. The GroEL-GroES system forms a nano-cage that allows encapsulation of the non-native substrate proteins and provides a physical environment optimized to promote and accelerate protein folding. The sequence is that of Chaperonin GroEL from Methanococcus vannielii (strain ATCC 35089 / DSM 1224 / JCM 13029 / OCM 148 / SB).